A 244-amino-acid chain; its full sequence is Ubiquinone biosynthesis O-methyltransferase (244 aa).

Residues Arg36, Gly60, Asp81, and Leu123 each contribute to the S-adenosyl-L-methionine site.

The protein belongs to the methyltransferase superfamily. UbiG/COQ3 family.

The catalysed reaction is a 3-demethylubiquinol + S-adenosyl-L-methionine = a ubiquinol + S-adenosyl-L-homocysteine + H(+). It carries out the reaction a 3-(all-trans-polyprenyl)benzene-1,2-diol + S-adenosyl-L-methionine = a 2-methoxy-6-(all-trans-polyprenyl)phenol + S-adenosyl-L-homocysteine + H(+). It functions in the pathway cofactor biosynthesis; ubiquinone biosynthesis. O-methyltransferase that catalyzes the 2 O-methylation steps in the ubiquinone biosynthetic pathway. The polypeptide is Ubiquinone biosynthesis O-methyltransferase (Rickettsia felis (strain ATCC VR-1525 / URRWXCal2) (Rickettsia azadi)).